The sequence spans 274 residues: Methionine aminopeptidase B (274 aa).

His102 lines the substrate pocket. Residues Asp120, Asp131, and His194 each coordinate a divalent metal cation. His201 serves as a coordination point for substrate. Positions 227 and 258 each coordinate a divalent metal cation.

Belongs to the peptidase M24A family. Methionine aminopeptidase type 1 subfamily. As to quaternary structure, monomer. The cofactor is Co(2+). It depends on Zn(2+) as a cofactor. Requires Mn(2+) as cofactor. Fe(2+) serves as cofactor.

The catalysed reaction is Release of N-terminal amino acids, preferentially methionine, from peptides and arylamides.. Removes the N-terminal methionine from nascent proteins. The N-terminal methionine is often cleaved when the second residue in the primary sequence is small and uncharged (Met-Ala-, Cys, Gly, Pro, Ser, Thr, or Val). Requires deformylation of the N(alpha)-formylated initiator methionine before it can be hydrolyzed. This Synechocystis sp. (strain ATCC 27184 / PCC 6803 / Kazusa) protein is Methionine aminopeptidase B.